A 275-amino-acid polypeptide reads, in one-letter code: Probable endonuclease 4 (275 aa).

Positions 66, 106, 140, 172, 175, 209, 222, 224, and 254 each coordinate Zn(2+).

The protein belongs to the AP endonuclease 2 family. Requires Zn(2+) as cofactor.

The enzyme catalyses Endonucleolytic cleavage to 5'-phosphooligonucleotide end-products.. Endonuclease IV plays a role in DNA repair. It cleaves phosphodiester bonds at apurinic or apyrimidinic (AP) sites, generating a 3'-hydroxyl group and a 5'-terminal sugar phosphate. The polypeptide is Probable endonuclease 4 (Halobacterium salinarum (strain ATCC 29341 / DSM 671 / R1)).